The chain runs to 375 residues: Probable UDP-N-acetylglucosamine 2-epimerase (375 aa).

Belongs to the UDP-N-acetylglucosamine 2-epimerase family.

It localises to the cytoplasm. It carries out the reaction UDP-N-acetyl-alpha-D-glucosamine = UDP-N-acetyl-alpha-D-mannosamine. Its pathway is glycan metabolism; exopolysaccharide EPS I biosynthesis. Functionally, may be involved in synthesis of N-acetyltrideoxygalactose, a component of exopolysaccharide EPS I which functions as a virulence factor. The polypeptide is Probable UDP-N-acetylglucosamine 2-epimerase (epsC) (Ralstonia nicotianae (strain ATCC BAA-1114 / GMI1000) (Ralstonia solanacearum)).